The following is a 240-amino-acid chain: GATA transcription factor 4 (240 aa).

The tract at residues 104-124 is disordered; it reads ISFTGKPRSRRSRAPAPSVAG. The Nuclear localization signal signature appears at 109 to 116; that stretch reads KPRSRRSR. Residues 154 to 208 form a GATA-type zinc finger; that stretch reads ADGARRCTHCASEKTPQWRTGPLGPKTLCNACGVRYKSGRLVPEYRPASSPTFVL.

It belongs to the type IV zinc-finger family. Class A subfamily. In terms of tissue distribution, expressed in roots, flowers and leaves, and to a lower extent in stems.

The protein resides in the nucleus. Functionally, transcriptional activator that specifically binds 5'-GATA-3' or 5'-GAT-3' motifs within gene promoters. May be involved in the regulation of some light-responsive genes. In Arabidopsis thaliana (Mouse-ear cress), this protein is GATA transcription factor 4 (GATA4).